A 444-amino-acid chain; its full sequence is SVGFKAGVKDYRLTYYTPEYQTKDTDILAAFRVTPQPGVPPEEAGAAVAAESSTGTWTTVWTDGLTSLDRYKGRCYDIEPVPGEENQFIAYVAYPLDLFEEGSVTNLFTSIVGNVFGFKALRALRLEDLRIPPAYSKTFQGPPHGIQVERDKLNKYGRPLLGCTIKPKLGLSAKNYGRAVYECLRGGLDFTKDDENVNSQPFMRWRDRFLFCAEAIYKAQTETGEIKGHYLNATAGTCEEMMKRAVFARELGVPIVMHDYLTGGFTANTSLAHYCRDNGLLLHIHRAMHAVIDRQRNHGMHFRVLAKALRMSGGDHIHAGTVVGKLEGEREVTLGFVDLLRDDFIEKDRSRGIYFTQDWVSMPGVLPVASGDIHVWHMPALTEIFGDDSVLQFGGGTLGHPWGNAPGAVANRVALEACVQARNEGRDLAREGNEVIREASKWSP.

N6,N6,N6-trimethyllysine is present on Lys5. Substrate contacts are provided by Asn114 and Thr164. The active-site Proton acceptor is Lys166. Position 168 (Lys168) interacts with substrate. Mg(2+)-binding residues include Lys192, Asp194, and Glu195. Lys192 carries the post-translational modification N6-carboxylysine. The active-site Proton acceptor is the His285. Positions 286, 318, and 370 each coordinate substrate.

This sequence belongs to the RuBisCO large chain family. Type I subfamily. Heterohexadecamer of 8 large chains and 8 small chains; disulfide-linked. The disulfide link is formed within the large subunit homodimers. Requires Mg(2+) as cofactor. Post-translationally, the disulfide bond which can form in the large chain dimeric partners within the hexadecamer appears to be associated with oxidative stress and protein turnover.

The protein resides in the plastid. It is found in the chloroplast. The enzyme catalyses 2 (2R)-3-phosphoglycerate + 2 H(+) = D-ribulose 1,5-bisphosphate + CO2 + H2O. It carries out the reaction D-ribulose 1,5-bisphosphate + O2 = 2-phosphoglycolate + (2R)-3-phosphoglycerate + 2 H(+). Its function is as follows. RuBisCO catalyzes two reactions: the carboxylation of D-ribulose 1,5-bisphosphate, the primary event in carbon dioxide fixation, as well as the oxidative fragmentation of the pentose substrate in the photorespiration process. Both reactions occur simultaneously and in competition at the same active site. This is Ribulose bisphosphate carboxylase large chain from Ginkgo biloba (Ginkgo).